The chain runs to 581 residues: Interleukin-22 receptor subunit alpha-1 (581 aa).

Residues M1–A15 form the signal peptide. The Extracellular portion of the chain corresponds to H16–S230. Fibronectin type-III domains follow at residues T18–S115 and P141–T221. A disulfide bridge links C71 with C79. N-linked (GlcNAc...) asparagine glycosylation is found at N80 and N172. The cysteines at positions 128 and 217 are disulfide-linked. Residues F231–Y251 traverse the membrane as a helical segment. At K252–S581 the chain is on the cytoplasmic side. The disordered stretch occupies residues Q343 to Y364. 2 positions are modified to phosphoserine; by GSK3-beta: S410 and S414. K449 is covalently cross-linked (Glycyl lysine isopeptide (Lys-Gly) (interchain with G-Cter in ubiquitin)).

It belongs to the type II cytokine receptor family. As to quaternary structure, heterodimer with IL10RB and with IL20RB. In terms of processing, phosphorylated by GSK3-BETA and MAPK; phosphorylation by GSK3-BETA stabilizes IL22RA1 by preventing its proteasomal degradation. In terms of tissue distribution, expressed in kidney, liver and lung.

Its subcellular location is the cell membrane. In terms of biological role, component of the receptor for IL20, IL22 and IL24. Component of IL22 receptor formed by IL22RA1 and IL10RB enabling IL22 signaling via JAK/STAT pathways. IL22 also induces activation of MAPK1/MAPK3 and Akt kinases pathways. Component of one of the receptor for IL20 and IL24 formed by IL22RA1 and IL20RB also signaling through STATs activation. Mediates IL24 antiangiogenic activity as well as IL24 inhibitory effect on endothelial cell tube formation and differentiation. The polypeptide is Interleukin-22 receptor subunit alpha-1 (Il22ra1) (Mus musculus (Mouse)).